A 174-amino-acid chain; its full sequence is Ribosomal RNA large subunit methyltransferase H (174 aa).

S-adenosyl-L-methionine-binding positions include Leu90, Gly122, and Leu141–Trp146.

It belongs to the RNA methyltransferase RlmH family. Homodimer.

The protein localises to the cytoplasm. It carries out the reaction pseudouridine(1915) in 23S rRNA + S-adenosyl-L-methionine = N(3)-methylpseudouridine(1915) in 23S rRNA + S-adenosyl-L-homocysteine + H(+). Functionally, specifically methylates the pseudouridine at position 1915 (m3Psi1915) in 23S rRNA. The sequence is that of Ribosomal RNA large subunit methyltransferase H from Brucella melitensis biotype 2 (strain ATCC 23457).